The sequence spans 254 residues: Glutamate racemase (254 aa).

Residues 10-11 (DS) and 42-43 (YG) each bind substrate. The active-site Proton donor/acceptor is the cysteine 73. 74 to 75 (NT) is a binding site for substrate. Cysteine 183 (proton donor/acceptor) is an active-site residue. 184–185 (TH) serves as a coordination point for substrate.

This sequence belongs to the aspartate/glutamate racemases family.

It carries out the reaction L-glutamate = D-glutamate. The protein operates within cell wall biogenesis; peptidoglycan biosynthesis. Functionally, provides the (R)-glutamate required for cell wall biosynthesis. This chain is Glutamate racemase, found in Herpetosiphon aurantiacus (strain ATCC 23779 / DSM 785 / 114-95).